The chain runs to 383 residues: ATP phosphoribosyltransferase regulatory subunit (383 aa).

This sequence belongs to the class-II aminoacyl-tRNA synthetase family. HisZ subfamily. In terms of assembly, heteromultimer composed of HisG and HisZ subunits.

Its subcellular location is the cytoplasm. It participates in amino-acid biosynthesis; L-histidine biosynthesis; L-histidine from 5-phospho-alpha-D-ribose 1-diphosphate: step 1/9. Functionally, required for the first step of histidine biosynthesis. May allow the feedback regulation of ATP phosphoribosyltransferase activity by histidine. In Paraburkholderia phymatum (strain DSM 17167 / CIP 108236 / LMG 21445 / STM815) (Burkholderia phymatum), this protein is ATP phosphoribosyltransferase regulatory subunit.